Here is a 661-residue protein sequence, read N- to C-terminus: Chermesin D/asnovolin J monooxidase nvfH (661 aa).

N-linked (GlcNAc...) asparagine glycosylation is present at N12. A helical membrane pass occupies residues 89-111; sequence VLIIGAGYGGLLFAVRIIQTGAF. FAD-binding positions include 128 to 131, 140 to 141, and Y146; these read TWYW and DV. Residue 138–140 coordinates NADP(+); the sequence is MCD. Residues 286-292 and 309-310 contribute to the NADP(+) site; these read TGATAIQ and RT. Residues N382 and N538 are each glycosylated (N-linked (GlcNAc...) asparagine).

Belongs to the FAD-binding monooxygenase family. It depends on FAD as a cofactor.

It localises to the membrane. The catalysed reaction is chermesin D + AH2 + O2 = asnovolin I + A + H2O. It carries out the reaction asnovolin J + AH2 + O2 = asnovolin A + A + H2O. Its pathway is secondary metabolite biosynthesis; terpenoid biosynthesis. Functionally, chermesin D/asnovolin J monooxidase; part of the gene cluster that mediates the biosynthesis of novofumigatonin, a heavily oxygenated meroterpenoid containing a unique orthoester moiety. The first step of the pathway is the synthesis of 3,5-dimethylorsellinic acid (DMOA) by the polyketide synthase nvfA via condensation of one acetyl-CoA starter unit with 3 malonyl-CoA units and 2 methylations. DMOA is then converted to farnesyl-DMOA by the farnesyltransferase nvfB. Epoxydation by FAD-dependent monooxygenase nvfK, followed by a protonation-initiated cyclization catalyzed by the terpene cyclase nvfL leads to the production of asnavolin H. The short chain dehydrogenase nvfC then as a 3-OH dehydrogenase of asnovolin H to yield chemesin D. There are two branches to synthesize asnovolin A from chemesin D. In one branch, chemesin D undergoes Baeyer-Villiger oxidation by nvfH, methylation by nvfJ, and enoyl reduction by the nvfM D enoylreductase that reduces the double bond between C-5'and C-6', to form respectively asnovolin I, asnovolin K, and asnovolin A. In the other branch, the methylation precedes the Baeyer-Villiger oxidation and the enoyl reduction to yield asnovolin A via the asnovolin J intermediate. Asnovolin A is further converted to fumigatonoid A by the Fe(II)/2-oxoglutarate-dependent dioxygenase nvfI that catalyzes an endoperoxidation reaction. The alpha/beta hydrolase nvfD then acts as an epimerase that converts fumigatonoid A to its C-5' epimer, which then undergoes spontaneous or nvfD-catalyzed lactonization. The following step utilizes the ketoreductase nvfG to produce fumigatonoid B. The dioxygenase nvfE further converts fumigatonoid B into fumigatonoid C. Finally the Fe(II)/2-oxoglutarate-dependent dioxygenase nvfF catalyzes two rounds of oxidation to transform fumigatonoid C into the end product, novofumigatonin A. The sequence is that of Chermesin D/asnovolin J monooxidase nvfH from Aspergillus novofumigatus (strain IBT 16806).